A 391-amino-acid chain; its full sequence is MTQVPNRETPRGVAILTRFLASESAGGIVLMAAALAALIVANSPLSAGYFSTLHSVWLGLSVELWINDGLMAIFFLMVGLEIKREVLAGGLATWGQRALPGFAALGGMLVPALIYIAINWGNPQTLSGWAIPAATDIAFALGVLSLLGNRVPTSLKVFLAALAILDDLGAVTIIAFFYSSGLNLPMLAAAFVTLAVLVALNRLNIRRLLPYLLLGALLWFFVLQSGVHATLAGVALALCIPMGKPEEEARSPLLLLEEKMHYWVAFAVVPIFGFANAGVSLSGITLANLIDPVPLGVALGLFVGKQIGVFLAAVLAIRAGLAVLPEGSNWVQLYGVAILCGIGFTMSLFIGNLAFPGSQHLIDEVKVGVLIGSGLAAVAGIVLLRSRFSRH.

A run of 11 helical transmembrane segments spans residues 25–45, 56–76, 98–118, 128–148, 157–177, 180–200, 208–228, 264–284, 297–317, 335–355, and 364–384; these read AGGIVLMAAALAALIVANSPL, VWLGLSVELWINDGLMAIFFL, ALPGFAALGGMLVPALIYIAI, GWAIPAATDIAFALGVLSLLG, VFLAALAILDDLGAVTIIAFF, SGLNLPMLAAAFVTLAVLVAL, LLPYLLLGALLWFFVLQSGVH, VAFAVVPIFGFANAGVSLSGI, VALGLFVGKQIGVFLAAVLAI, GVAILCGIGFTMSLFIGNLAF, and EVKVGVLIGSGLAAVAGIVLL.

This sequence belongs to the NhaA Na(+)/H(+) (TC 2.A.33) antiporter family.

The protein localises to the cell inner membrane. The catalysed reaction is Na(+)(in) + 2 H(+)(out) = Na(+)(out) + 2 H(+)(in). Na(+)/H(+) antiporter that extrudes sodium in exchange for external protons. The protein is Na(+)/H(+) antiporter NhaA 2 of Pseudomonas syringae pv. tomato (strain ATCC BAA-871 / DC3000).